A 473-amino-acid chain; its full sequence is BPI fold-containing family B member 3 (473 aa).

Positions 1-20 (MMPGVYALLLLWGLATPCLG) are cleaved as a signal peptide. Asn-139 carries N-linked (GlcNAc...) asparagine glycosylation. A disulfide bridge connects residues Cys-161 and Cys-196.

It belongs to the BPI/LBP/Plunc superfamily. BPI/LBP family. As to expression, highly expressed in olfactory mucosa but undetectable in thymus, kidney, lung, brain, spleen and liver.

The protein resides in the secreted. May have the capacity to recognize and bind specific classes of odorants. May act as a carrier molecule, transporting odorants across the mucus layer to access receptor sites. May serve as a primary defense mechanism by recognizing and removing potentially harmful odorants or pathogenic microorganisms from the mucosa or clearing excess odorant from mucus to enable new odorant stimuli to be received. The polypeptide is BPI fold-containing family B member 3 (Rattus norvegicus (Rat)).